A 456-amino-acid polypeptide reads, in one-letter code: Cobyrinate a,c-diamide synthase (456 aa).

The 193-residue stretch at 247–439 (PIAIARDRAF…LHLHFGGKPW (193 aa)) folds into the GATase cobBQ-type domain. The active-site Nucleophile is Cys-330.

The protein belongs to the CobB/CbiA family. It depends on Mg(2+) as a cofactor.

It carries out the reaction cob(II)yrinate + 2 L-glutamine + 2 ATP + 2 H2O = cob(II)yrinate a,c diamide + 2 L-glutamate + 2 ADP + 2 phosphate + 2 H(+). It participates in cofactor biosynthesis; adenosylcobalamin biosynthesis; cob(II)yrinate a,c-diamide from sirohydrochlorin (anaerobic route): step 10/10. Catalyzes the ATP-dependent amidation of the two carboxylate groups at positions a and c of cobyrinate, using either L-glutamine or ammonia as the nitrogen source. This Synechococcus sp. (strain ATCC 27144 / PCC 6301 / SAUG 1402/1) (Anacystis nidulans) protein is Cobyrinate a,c-diamide synthase.